A 194-amino-acid chain; its full sequence is 3-isopropylmalate dehydratase small subunit (194 aa).

The protein belongs to the LeuD family. LeuD type 1 subfamily. As to quaternary structure, heterodimer of LeuC and LeuD.

It catalyses the reaction (2R,3S)-3-isopropylmalate = (2S)-2-isopropylmalate. It functions in the pathway amino-acid biosynthesis; L-leucine biosynthesis; L-leucine from 3-methyl-2-oxobutanoate: step 2/4. Catalyzes the isomerization between 2-isopropylmalate and 3-isopropylmalate, via the formation of 2-isopropylmaleate. The chain is 3-isopropylmalate dehydratase small subunit from Limosilactobacillus fermentum (strain NBRC 3956 / LMG 18251) (Lactobacillus fermentum).